Consider the following 745-residue polypeptide: UPF0508 protein YJR030C (745 aa).

Belongs to the UPF0508 family.

The protein is UPF0508 protein YJR030C of Saccharomyces cerevisiae (strain ATCC 204508 / S288c) (Baker's yeast).